Consider the following 582-residue polypeptide: Inactive metallocarboxypeptidase ECM14 (582 aa).

Residues 1 to 20 (MHILQVITGATLVSVPFVSA) form the signal peptide. The propeptide occupies 21–172 (IPSSTSEFLP…QAVYESYPQP (152 aa)). A Peptidase M14 domain is found at 200–522 (DYQPLSVIIP…NAVLVFGQFL (323 aa)). 2 residues coordinate Zn(2+): histidine 265 and glutamate 268. Substrate is bound by residues 265-268 (HARE), arginine 323, and 340-341 (DR). Cysteines 334 and 357 form a disulfide. Asparagine 381 and asparagine 387 each carry an N-linked (GlcNAc...) asparagine glycan. Residue histidine 397 coordinates Zn(2+). Residue 398-399 (SY) coordinates substrate. Residues 561 to 571 (SNQLEDDDNEN) show a composition bias toward acidic residues. Positions 561–582 (SNQLEDDDNENDTLLGFRTQKV) are disordered. N-linked (GlcNAc...) asparagine glycosylation is present at asparagine 571.

This sequence belongs to the peptidase M14 family. Zn(2+) is required as a cofactor.

The protein resides in the vacuole. It localises to the secreted. Functionally, inactive carboxypeptidase that may play a role in cell wall organization and biogenesis. The sequence is that of Inactive metallocarboxypeptidase ECM14 (ECM14) from Coccidioides posadasii (strain C735) (Valley fever fungus).